Consider the following 201-residue polypeptide: 3-isopropylmalate dehydratase small subunit (201 aa).

It belongs to the LeuD family. LeuD type 1 subfamily. In terms of assembly, heterodimer of LeuC and LeuD.

The catalysed reaction is (2R,3S)-3-isopropylmalate = (2S)-2-isopropylmalate. It functions in the pathway amino-acid biosynthesis; L-leucine biosynthesis; L-leucine from 3-methyl-2-oxobutanoate: step 2/4. Functionally, catalyzes the isomerization between 2-isopropylmalate and 3-isopropylmalate, via the formation of 2-isopropylmaleate. This Methylorubrum populi (strain ATCC BAA-705 / NCIMB 13946 / BJ001) (Methylobacterium populi) protein is 3-isopropylmalate dehydratase small subunit.